Consider the following 178-residue polypeptide: Probable chorismate pyruvate-lyase (178 aa).

Residues Arg-72, Leu-110, and Glu-169 each contribute to the substrate site.

It belongs to the UbiC family.

It is found in the cytoplasm. The catalysed reaction is chorismate = 4-hydroxybenzoate + pyruvate. The protein operates within cofactor biosynthesis; ubiquinone biosynthesis. Removes the pyruvyl group from chorismate, with concomitant aromatization of the ring, to provide 4-hydroxybenzoate (4HB) for the ubiquinone pathway. The chain is Probable chorismate pyruvate-lyase from Nitrosomonas eutropha (strain DSM 101675 / C91 / Nm57).